Reading from the N-terminus, the 255-residue chain is Probable ubiquitin carboxyl-terminal hydrolase (255 aa).

The region spanning 13–237 (NWIPLEANPE…IRFNLMGLVK (225 aa)) is the UCH catalytic domain. The segment at 16–21 (PLEANP) is interaction with ubiquitin. Residue Cys103 is the Nucleophile of the active site. The active-site Proton donor is His177. The interval 227–232 (EIRFNL) is interaction with ubiquitin. A disordered region spans residues 235-255 (LVKKPNEESEEEEEKEKEETK). Residues 242–255 (ESEEEEEKEKEETK) show a composition bias toward acidic residues.

The protein belongs to the peptidase C12 family.

The protein resides in the cytoplasm. It catalyses the reaction Thiol-dependent hydrolysis of ester, thioester, amide, peptide and isopeptide bonds formed by the C-terminal Gly of ubiquitin (a 76-residue protein attached to proteins as an intracellular targeting signal).. Functionally, ubiquitin-protein hydrolase is involved both in the processing of ubiquitin precursors and of ubiquitinated proteins. This enzyme is a thiol protease that recognizes and hydrolyzes a peptide bond at the C-terminal glycine of either ubiquitin or nedd8. The chain is Probable ubiquitin carboxyl-terminal hydrolase (uch1) from Dictyostelium discoideum (Social amoeba).